The primary structure comprises 88 residues: Small ribosomal subunit protein uS15 (88 aa).

Belongs to the universal ribosomal protein uS15 family. In terms of assembly, part of the 30S ribosomal subunit. Forms a bridge to the 50S subunit in the 70S ribosome, contacting the 23S rRNA.

One of the primary rRNA binding proteins, it binds directly to 16S rRNA where it helps nucleate assembly of the platform of the 30S subunit by binding and bridging several RNA helices of the 16S rRNA. Functionally, forms an intersubunit bridge (bridge B4) with the 23S rRNA of the 50S subunit in the ribosome. This Polaromonas naphthalenivorans (strain CJ2) protein is Small ribosomal subunit protein uS15.